The primary structure comprises 618 residues: 1-deoxy-D-xylulose-5-phosphate synthase (618 aa).

Thiamine diphosphate contacts are provided by residues His72 and 113-115; that span reads GHA. Asp144 contacts Mg(2+). Residues 145-146, Asn173, His284, and Glu359 each bind thiamine diphosphate; that span reads GA. Position 173 (Asn173) interacts with Mg(2+).

The protein belongs to the transketolase family. DXPS subfamily. As to quaternary structure, homodimer. Requires Mg(2+) as cofactor. Thiamine diphosphate serves as cofactor.

It catalyses the reaction D-glyceraldehyde 3-phosphate + pyruvate + H(+) = 1-deoxy-D-xylulose 5-phosphate + CO2. Its pathway is metabolic intermediate biosynthesis; 1-deoxy-D-xylulose 5-phosphate biosynthesis; 1-deoxy-D-xylulose 5-phosphate from D-glyceraldehyde 3-phosphate and pyruvate: step 1/1. Catalyzes the acyloin condensation reaction between C atoms 2 and 3 of pyruvate and glyceraldehyde 3-phosphate to yield 1-deoxy-D-xylulose-5-phosphate (DXP). The sequence is that of 1-deoxy-D-xylulose-5-phosphate synthase from Dictyoglomus turgidum (strain DSM 6724 / Z-1310).